We begin with the raw amino-acid sequence, 444 residues long: UPF0761 membrane protein RC1_0578 (444 aa).

A run of 6 helical transmembrane segments spans residues 49-69 (LLAL…FPAY), 103-123 (AAAL…LLFF), 145-165 (LLSF…SLSV), 186-206 (FMLP…MIPN), 219-239 (IAAA…IAAF), and 248-268 (ALSV…VVLF). Positions 423 to 444 (SGQPSGQVETAVRQRTGLQGRI) are disordered.

It belongs to the UPF0761 family.

It localises to the cell inner membrane. This Rhodospirillum centenum (strain ATCC 51521 / SW) protein is UPF0761 membrane protein RC1_0578.